Reading from the N-terminus, the 1698-residue chain is Protein 4.1 homolog (1698 aa).

Positions 1 to 31 are disordered; that stretch reads MPAEIKPSAPAEPETPTKSKPKSSSSSHGKP. Over residues 12-27 the composition is skewed to low complexity; sequence EPETPTKSKPKSSSSS. The 283-residue stretch at 32–314 folds into the FERM domain; the sequence is ALARVTLLDG…EHHTFFRLMT (283 aa). Residues 317–434 are hydrophilic; sequence PVSKSKMFPV…KEEKERKERE (118 aa). 2 disordered regions span residues 335-361 and 374-710; these read GRTQ…SGAR and EKEK…SDPT. The span at 374-448 shows a compositional bias: basic and acidic residues; sequence EKEKVARKSS…EEKKKAEKAA (75 aa). Residues 449-461 are compositionally biased toward low complexity; it reads KAALAAGAAAGAA. Phosphoserine occurs at positions 471, 474, and 478. A compositionally biased stretch (basic and acidic residues) spans 499–514; it reads KDGKDKSGKDKDKEVG. A compositionally biased stretch (polar residues) spans 562 to 571; the sequence is DGNTSPTRKS. Ser-566 carries the post-translational modification Phosphoserine. The span at 579–589 shows a compositional bias: basic and acidic residues; it reads YDQDPNSRKSG. Polar residues predominate over residues 594–603; it reads EQLSPTSQQK. Positions 618–627 are enriched in basic and acidic residues; the sequence is ALKETAEKLK. Phosphoserine occurs at positions 659 and 687. Residues 684 to 696 show a composition bias toward polar residues; it reads RSYSPTKGPQGYS. Thr-689 is modified (phosphothreonine). Ser-697, Ser-1398, Ser-1401, and Ser-1402 each carry phosphoserine. The tract at residues 1286–1698 is C-terminal (CTD); that stretch reads GEIVQVDPND…EKIEIQQQTQ (413 aa). Position 1407 is a phosphothreonine (Thr-1407). A compositionally biased stretch (basic and acidic residues) spans 1509 to 1532; sequence LGKNAKTEQLEEKTVATTRTHDPN. The interval 1509 to 1599 is disordered; it reads LGKNAKTEQL…SPLFTTSATT (91 aa). Residues 1533 to 1554 show a composition bias toward polar residues; the sequence is KQQQRVVTQEVKTTATVTSGDQ. Positions 1561 to 1571 are enriched in low complexity; the sequence is VSSTSSGDSGT. Polar residues predominate over residues 1584-1599; that stretch reads RTDNQKSPLFTTSATT. Ser-1590 is modified (phosphoserine).

In terms of tissue distribution, at onset of germ band retraction, expression is seen in epidermis, hindgut and foregut. During retraction, expression extends to tracheal branches and salivary glands.

The protein resides in the cell junction. It localises to the septate junction. Its function is as follows. An integral component of the septate junction. May play a role in cell-cell interactions that are necessary for proper development. Vital for embryonic development. This is Protein 4.1 homolog (cora) from Drosophila melanogaster (Fruit fly).